The sequence spans 154 residues: Protein X (154 aa).

The mitochondrial targeting sequence stretch occupies residues 68 to 117; the sequence is PCALRFTSARCMETTVNAHQILPKVLHKRTLGLPAMSTTDLEAYFKDSVF.

Belongs to the orthohepadnavirus protein X family. In terms of assembly, may form homodimer. May interact with host CEBPA, CFLAR, CREB1, DDB1, E4F1, HBXIP, HSPD1/HSP60, NFKBIA, POLR2E and SMAD4. Interacts with host SMC5-SMC6 complex and induces its degradation. Interacts with host TRPC4AP; leading to prevent ubiquitination of TRPC4AP. Interacts with host PLSCR1; this interaction promotes ubiquitination and degradation of HBx and impairs HBx-mediated cell proliferation. Post-translationally, a fraction may be phosphorylated in insect cells and HepG2 cells, a human hepatoblastoma cell line. Phosphorylated in vitro by host protein kinase C or mitogen-activated protein kinase. N-acetylated in insect cells.

The protein resides in the host cytoplasm. It is found in the host nucleus. Its subcellular location is the host mitochondrion. Its function is as follows. Multifunctional protein that plays a role in silencing host antiviral defenses and promoting viral transcription. Does not seem to be essential for HBV infection. May be directly involved in development of cirrhosis and liver cancer (hepatocellular carcinoma). Most of cytosolic activities involve modulation of cytosolic calcium. The effect on apoptosis is controversial depending on the cell types in which the studies have been conducted. May induce apoptosis by localizing in mitochondria and causing loss of mitochondrial membrane potential. May also modulate apoptosis by binding host CFLAR, a key regulator of the death-inducing signaling complex (DISC). Promotes viral transcription by using the host E3 ubiquitin ligase DDB1 to target the SMC5-SMC6 complex to proteasomal degradation. This host complex would otherwise bind to viral episomal DNA, and prevents its transcription. Moderately stimulates transcription of many different viral and cellular transcription elements. Promoters and enhancers stimulated by HBx contain DNA binding sites for NF-kappa-B, AP-1, AP-2, c-EBP, ATF/CREB, or the calcium-activated factor NF-AT. This chain is Protein X, found in Homo sapiens (Human).